The chain runs to 214 residues: Metalloproteinase inhibitor 3 (214 aa).

The first 26 residues, 1–26 (MVFSTTAALSLLLALSSMQLSEVSEA), serve as a signal peptide directing secretion. Cys-27 lines the Zn(2+) pocket. 2 involved in metalloproteinase-binding regions span residues 27 to 30 (CTCM) and 91 to 92 (ES). Disulfide bonds link Cys-27-Cys-94, Cys-29-Cys-121, Cys-39-Cys-146, Cys-148-Cys-195, Cys-153-Cys-158, and Cys-166-Cys-187. An NTR domain is found at 27–146 (CTCMPNHPQE…GLNHRYQYGC (120 aa)). Asn-210 carries an N-linked (GlcNAc...) asparagine glycan.

The protein belongs to the protease inhibitor I35 (TIMP) family. Expressed abundantly in brain and cartilage.

It localises to the secreted. Its subcellular location is the extracellular space. The protein localises to the extracellular matrix. Its function is as follows. Complexes with metalloproteinases (such as collagenases) and irreversibly inactivates them by binding to their catalytic zinc cofactor. May form part of a tissue-specific acute response to remodeling stimuli. The sequence is that of Metalloproteinase inhibitor 3 (TIMP3) from Scyliorhinus torazame (Cloudy catshark).